A 439-amino-acid chain; its full sequence is MALNKLLSLTFQLLLFLLSVSSESPWIAEDTSQIQTKLLEFAKSPEVFDWMVKIRRKIHENPELGYEELETSKLIRSELELIGIKYRYPVAITGVIGYIGTGEPPFVALRADMDALPIQEGVEWEHKSKIAGKMHACGHDGHVTMLLGAAKILHEHRHHLQGTVVLIFQPAEEGLSGAKKMREEGALKNVEAIFGIHLSARIPFGKAASRAGSFLAGAGVFEAVITGKGGHAAIPQHTIDPVVAASSIVLSLQQLVSRETDPLDSKVVTVSKVNGGNAFNVIPDSITIGGTLRAFTGFTQLQQRVKEVITKQAAVHRCNASVNLTPNGREPMPPTVNNKDLYKQFKKVVRDLLGQEAFVEAAPVMGSEDFSYFAETIPGHFSLLGMQDETNGYASSHSPLYRINEDVLPYGAAIHASMAVQYLKEKASKGSVSGFHEEL.

The signal sequence occupies residues 1-21 (MALNKLLSLTFQLLLFLLSVS). The Mn(2+) site is built by Cys137, His139, Glu173, His197, and His397. A Prevents secretion from ER motif is present at residues 436-439 (HEEL).

The protein belongs to the peptidase M20 family. As to quaternary structure, monomer. Mn(2+) serves as cofactor. As to expression, expressed in leaves, stems, siliques, seeds and flowers. Detected in the distal tips of cotyledons and seedling leaves, hydathodes of leaves from mature plants, pollen, ovules and developing seeds.

It localises to the endoplasmic reticulum lumen. Hydrolyzes certain amino acid conjugates of the plant growth regulator indole-3-acetic acid (IAA), including IAA-Ala, IAA-Leu, IAA-Met, IAA-Phe, IAA-Ser, IAA-Thr, IAA-Tyr and IAA-Val. Is the most efficient enzyme of the ILL family for IAA-Ala. Not important for IAA-Leu hydrolysis in roots. May act with ILR1 to provide free IAA to germinating seedlings. This chain is IAA-amino acid hydrolase ILR1-like 2, found in Arabidopsis thaliana (Mouse-ear cress).